The sequence spans 76 residues: Bowman-Birk type proteinase inhibitor DE-4 (76 aa).

Intrachain disulfides connect Cys-15–Cys-69, Cys-16–Cys-31, Cys-19–Cys-65, Cys-21–Cys-29, Cys-39–Cys-46, Cys-43–Cys-58, and Cys-48–Cys-56.

This sequence belongs to the Bowman-Birk serine protease inhibitor family.

This Macrotyloma axillare (Perennial horse gram) protein is Bowman-Birk type proteinase inhibitor DE-4.